Here is a 652-residue protein sequence, read N- to C-terminus: MTQKDSPWLFRTYAGHSTAKASNALYRTNLAKGQTGLSVAFDLPTQTGYDSDDALARGEVGKVGVPICHLGDMRMLFDQIPLEQMNTSMTINATAPWLLALYIAVAEEQGADISKLQGTVQNDLMKEYLSRGTYICPPRPSLRMITDVAAYTRVHLPKWNPMNVCSYHLQEAGATPEQELAFALATGIAVLDDLRTKVPAEHFPAMVGRISFFVNAGIRFVTEMCKMRAFVDLWDEICRDRYGIEEEKYRRFRYGVQVNSLGLTEQQPENNVYRILIEMLAVTLSKKARARAVQLPAWNEALGLPRPWDQQWSLRMQQILAYESDLLEYEDLFDGNPAIERKVEALKDGAREELAHIEAMGGAIEAIDYMKARLVESNAERIARVETGETVVVGVNRWTSGAPSPLTTGDGAIMVADPEAERDQIARLEAWRAGRDGAAVAAALAELRRAATSGENVMPASIAAAKAGATTGEWAAELRRAFGEFRGPTGVARAPSNRTEGLDPIREAVQAVSARLGRPLKFVVGKPGLDGHSNGAEQIAARARDCGMDITYDGIRLTPAEIVAKAADERAHVLGLSILSGSHMPLVTEVLAEMRRAGLDVPLIVGGIIPEEDAAELRASGVAAVYTPKDFELNRIMMDIVGLVDRTALAAE.

A B12-binding domain is found at Pro519–Thr647. Residue His532 participates in adenosylcob(III)alamin binding.

It belongs to the methylmalonyl-CoA mutase family. In terms of assembly, homodimer. The cofactor is adenosylcob(III)alamin.

It catalyses the reaction (2R)-ethylmalonyl-CoA = (2S)-methylsuccinyl-CoA. Functionally, radical enzyme that catalyzes the transformation of (2R)-ethylmalonyl-CoA to (2S)-methylsuccinyl-CoA. Is involved in the ethylmalonyl-CoA pathway for acetyl-CoA assimilation required for R.sphaeroides growth on acetate as sole carbon source. Is highly specific for its substrate, ethylmalonyl-CoA, and accepts methylmalonyl-CoA only at 0.2% relative activity. The protein is Ethylmalonyl-CoA mutase of Cereibacter sphaeroides (strain ATCC 17023 / DSM 158 / JCM 6121 / CCUG 31486 / LMG 2827 / NBRC 12203 / NCIMB 8253 / ATH 2.4.1.) (Rhodobacter sphaeroides).